The sequence spans 413 residues: Multidrug resistance protein MdtA (413 aa).

The N-terminal stretch at 1–20 (MKGSNTFRWAIAIGVVVAAA) is a signal peptide. 2 disordered regions span residues 31–57 (SPTA…RDGP) and 391–413 (EPQT…GARA). Basic and acidic residues predominate over residues 397–413 (ADEKSPSRHEGQKGARA).

The protein belongs to the membrane fusion protein (MFP) (TC 8.A.1) family. As to quaternary structure, part of a tripartite efflux system composed of MdtA, MdtB and MdtC.

The protein resides in the cell inner membrane. This Salmonella typhimurium (strain LT2 / SGSC1412 / ATCC 700720) protein is Multidrug resistance protein MdtA.